We begin with the raw amino-acid sequence, 171 residues long: tRNA-splicing endonuclease (171 aa).

Catalysis depends on residues Tyr-110, His-117, and Lys-148.

It belongs to the tRNA-intron endonuclease family. Archaeal short subfamily. In terms of assembly, homotetramer; although the tetramer contains four active sites, only two participate in the cleavage. Therefore, it should be considered as a dimer of dimers.

The enzyme catalyses pretRNA = a 3'-half-tRNA molecule with a 5'-OH end + a 5'-half-tRNA molecule with a 2',3'-cyclic phosphate end + an intron with a 2',3'-cyclic phosphate and a 5'-hydroxyl terminus.. Functionally, endonuclease that removes tRNA introns. Cleaves pre-tRNA at the 5'- and 3'-splice sites to release the intron. The products are an intron and two tRNA half-molecules bearing 2',3' cyclic phosphate and 5'-OH termini. Recognizes a pseudosymmetric substrate in which 2 bulged loops of 3 bases are separated by a stem of 4 bp. In Thermococcus onnurineus (strain NA1), this protein is tRNA-splicing endonuclease.